Consider the following 625-residue polypeptide: Phosphomethylpyrimidine synthase (625 aa).

Residues N237, M266, Y295, H331, S351–G353, D392–R395, and E431 each bind substrate. H435 contributes to the Zn(2+) binding site. Y458 serves as a coordination point for substrate. H499 contacts Zn(2+). Residues C579, C582, and C587 each contribute to the [4Fe-4S] cluster site.

It belongs to the ThiC family. As to quaternary structure, homodimer. [4Fe-4S] cluster serves as cofactor.

It catalyses the reaction 5-amino-1-(5-phospho-beta-D-ribosyl)imidazole + S-adenosyl-L-methionine = 4-amino-2-methyl-5-(phosphooxymethyl)pyrimidine + CO + 5'-deoxyadenosine + formate + L-methionine + 3 H(+). It participates in cofactor biosynthesis; thiamine diphosphate biosynthesis. Functionally, catalyzes the synthesis of the hydroxymethylpyrimidine phosphate (HMP-P) moiety of thiamine from aminoimidazole ribotide (AIR) in a radical S-adenosyl-L-methionine (SAM)-dependent reaction. This is Phosphomethylpyrimidine synthase from Cupriavidus metallidurans (strain ATCC 43123 / DSM 2839 / NBRC 102507 / CH34) (Ralstonia metallidurans).